Here is a 399-residue protein sequence, read N- to C-terminus: CCA-adding enzyme (399 aa).

The ATP site is built by G32 and R35. Positions 32 and 35 each coordinate CTP. Residues D45 and D47 each coordinate Mg(2+). The ATP site is built by R116, D159, R162, R165, and R168. CTP is bound by residues R116, D159, R162, R165, and R168.

Belongs to the tRNA nucleotidyltransferase/poly(A) polymerase family. Bacterial CCA-adding enzyme type 3 subfamily. As to quaternary structure, homodimer. The cofactor is Mg(2+).

The enzyme catalyses a tRNA precursor + 2 CTP + ATP = a tRNA with a 3' CCA end + 3 diphosphate. It catalyses the reaction a tRNA with a 3' CCA end + 2 CTP + ATP = a tRNA with a 3' CCACCA end + 3 diphosphate. Functionally, catalyzes the addition and repair of the essential 3'-terminal CCA sequence in tRNAs without using a nucleic acid template. Adds these three nucleotides in the order of C, C, and A to the tRNA nucleotide-73, using CTP and ATP as substrates and producing inorganic pyrophosphate. tRNA 3'-terminal CCA addition is required both for tRNA processing and repair. Also involved in tRNA surveillance by mediating tandem CCA addition to generate a CCACCA at the 3' terminus of unstable tRNAs. While stable tRNAs receive only 3'-terminal CCA, unstable tRNAs are marked with CCACCA and rapidly degraded. This Streptococcus pneumoniae serotype 19F (strain G54) protein is CCA-adding enzyme.